Here is a 310-residue protein sequence, read N- to C-terminus: Translocator protein BipD (310 aa).

2 coiled-coil regions span residues 127–171 (DPIL…LQDY) and 250–299 (DTAR…AIST).

The protein belongs to the invasin protein D family.

The protein localises to the secreted. In terms of biological role, required for invasion of epithelial cells, as well as for survival within host cells, escape from endocytic vesicles and subsequent actin-tail formation. Probably regulates the secretion of effectors BipB and BipC and their final integration into the target cell membrane. This chain is Translocator protein BipD (bipD), found in Burkholderia thailandensis (strain ATCC 700388 / DSM 13276 / CCUG 48851 / CIP 106301 / E264).